The chain runs to 66 residues: MDHSLNSLNNFDFLARSFARMHAEGRPVDILAVTGNMDEEHRTWFCARYAWYCQQMMQARELELEH.

The protein belongs to the GlgS family.

Major determinant of cell surface composition. Negatively regulates motility, adhesion and synthesis of biofilm exopolysaccharides. The chain is Surface composition regulator from Escherichia coli O139:H28 (strain E24377A / ETEC).